The chain runs to 83 residues: Cell division topological specificity factor (83 aa).

Belongs to the MinE family.

Prevents the cell division inhibition by proteins MinC and MinD at internal division sites while permitting inhibition at polar sites. This ensures cell division at the proper site by restricting the formation of a division septum at the midpoint of the long axis of the cell. This is Cell division topological specificity factor from Alcanivorax borkumensis (strain ATCC 700651 / DSM 11573 / NCIMB 13689 / SK2).